Reading from the N-terminus, the 405-residue chain is Acetate kinase (405 aa).

Asparagine 7 is a binding site for Mg(2+). Lysine 14 contributes to the ATP binding site. Arginine 99 contributes to the substrate binding site. The active-site Proton donor/acceptor is the aspartate 156. Residue 215–219 (HLGNG) participates in ATP binding. Glutamate 391 is a binding site for Mg(2+).

It belongs to the acetokinase family. In terms of assembly, homodimer. Mg(2+) is required as a cofactor. Requires Mn(2+) as cofactor.

It is found in the cytoplasm. It carries out the reaction acetate + ATP = acetyl phosphate + ADP. It participates in metabolic intermediate biosynthesis; acetyl-CoA biosynthesis; acetyl-CoA from acetate: step 1/2. Its function is as follows. Catalyzes the formation of acetyl phosphate from acetate and ATP. Can also catalyze the reverse reaction. This chain is Acetate kinase, found in Nostoc sp. (strain PCC 7120 / SAG 25.82 / UTEX 2576).